The chain runs to 108 residues: Integration host factor subunit alpha (108 aa).

The protein belongs to the bacterial histone-like protein family. As to quaternary structure, heterodimer of an alpha and a beta chain.

In terms of biological role, this protein is one of the two subunits of integration host factor, a specific DNA-binding protein that functions in genetic recombination as well as in transcriptional and translational control. This is Integration host factor subunit alpha from Methylorubrum extorquens (strain CM4 / NCIMB 13688) (Methylobacterium extorquens).